Reading from the N-terminus, the 172-residue chain is Small ribosomal subunit protein uS5 (172 aa).

The region spanning 17–80 (LREKMIAINR…EEARRNLAKI (64 aa)) is the S5 DRBM domain.

This sequence belongs to the universal ribosomal protein uS5 family. Part of the 30S ribosomal subunit. Contacts proteins S4 and S8.

Functionally, with S4 and S12 plays an important role in translational accuracy. Its function is as follows. Located at the back of the 30S subunit body where it stabilizes the conformation of the head with respect to the body. This is Small ribosomal subunit protein uS5 from Variovorax paradoxus (strain S110).